The sequence spans 464 residues: Chitotriosidase-1 (464 aa).

Positions 1-21 (MVQSLAWAGVMTLLMVQWGSA) are cleaved as a signal peptide. Residues 22 to 386 (AKLVCYLTNW…RTLRQELNLP (365 aa)) form the GH18 domain. An intrachain disulfide couples C26 to C51. Chitin is bound by residues 70–71 (EH) and 97–100 (GGWT). E140 functions as the Proton donor in the catalytic mechanism. 210–213 (MAYD) provides a ligand contact to chitin. A disulfide bridge connects residues C307 and C368. Positions 385–416 (LPSETPRSPEQIIPEPRPSSMPEQGPSPGLDN) are disordered. Residues 415–464 (DNFCQGKADGVYPNPGDESTYYNCGGGRLFQQSCPPGLVFRASCKCCTWS) form the Chitin-binding type-2 domain. C448 and C461 are joined by a disulfide.

This sequence belongs to the glycosyl hydrolase 18 family. Chitinase class II subfamily. As to quaternary structure, monomer. In terms of tissue distribution, highly expressed in tongue, stomach, kidney, brain, skin, testis, and bone marrow. Low level of expression was found in lung, heart, spleen, small intestine, and liver. Not detectable in pancreas, salivary gland, large intestine, uterus, or peripheral blood mononuclear cells (PBMC).

Its subcellular location is the secreted. The protein resides in the lysosome. It carries out the reaction Random endo-hydrolysis of N-acetyl-beta-D-glucosaminide (1-&gt;4)-beta-linkages in chitin and chitodextrins.. Functionally, degrades chitin, chitotriose and chitobiose. May participate in the defense against nematodes and other pathogens. This chain is Chitotriosidase-1 (Chit1), found in Mus musculus (Mouse).